Consider the following 637-residue polypeptide: Glutathione hydrolase 3 (637 aa).

The helical transmembrane segment at 28–48 (LKISLLLLLILLATSGYYSFS) threads the bilayer. N-linked (GlcNAc...) asparagine glycosylation occurs at Asn-50. L-glutamate is bound at residue Arg-147. Asn-271, Asn-374, and Asn-398 each carry an N-linked (GlcNAc...) asparagine glycan. The Nucleophile role is filled by Thr-418. L-glutamate contacts are provided by residues Thr-436, Asn-438, Glu-457, Asp-460, 488–489 (SS), and 509–510 (GG). A glycan (N-linked (GlcNAc...) asparagine) is linked at Asn-553.

The protein belongs to the gamma-glutamyltransferase family. As to expression, expressed in roots, cotyledons, leaves, flowers and siliques.

It is found in the vacuole membrane. The catalysed reaction is an N-terminal (5-L-glutamyl)-[peptide] + an alpha-amino acid = 5-L-glutamyl amino acid + an N-terminal L-alpha-aminoacyl-[peptide]. The enzyme catalyses glutathione + H2O = L-cysteinylglycine + L-glutamate. It catalyses the reaction an S-substituted glutathione + H2O = an S-substituted L-cysteinylglycine + L-glutamate. It functions in the pathway sulfur metabolism; glutathione metabolism. In terms of biological role, may play a role in protecting plants from some xenobiotic chemicals by degrading vacuolar glutathione conjugates into cysteine conjugates. This Arabidopsis thaliana (Mouse-ear cress) protein is Glutathione hydrolase 3 (GGT3).